The primary structure comprises 387 residues: S-adenosylmethionine synthase (387 aa).

His-15 contacts ATP. Asp-17 contacts Mg(2+). K(+) is bound at residue Glu-43. L-methionine is bound by residues Glu-56 and Gln-99. Residues 99-109 (QSPDIALGVNR) form a flexible loop region. ATP contacts are provided by residues 166–168 (DAK), 232–233 (RF), Asp-241, 247–248 (RK), Ala-264, and Lys-268. Asp-241 contacts L-methionine. Residue Lys-272 participates in L-methionine binding.

Belongs to the AdoMet synthase family. As to quaternary structure, homotetramer; dimer of dimers. Mg(2+) is required as a cofactor. Requires K(+) as cofactor.

It localises to the cytoplasm. The enzyme catalyses L-methionine + ATP + H2O = S-adenosyl-L-methionine + phosphate + diphosphate. It participates in amino-acid biosynthesis; S-adenosyl-L-methionine biosynthesis; S-adenosyl-L-methionine from L-methionine: step 1/1. Catalyzes the formation of S-adenosylmethionine (AdoMet) from methionine and ATP. The overall synthetic reaction is composed of two sequential steps, AdoMet formation and the subsequent tripolyphosphate hydrolysis which occurs prior to release of AdoMet from the enzyme. This Nitrosomonas eutropha (strain DSM 101675 / C91 / Nm57) protein is S-adenosylmethionine synthase.